The sequence spans 217 residues: Somatotropin (217 aa).

Positions methionine 1–alanine 27 are cleaved as a signal peptide. Residue histidine 46 participates in Zn(2+) binding. An intrachain disulfide couples cysteine 79 to cysteine 190. Serine 132 bears the Phosphoserine mark. Residue glutamate 199 coordinates Zn(2+). The cysteines at positions 207 and 215 are disulfide-linked.

This sequence belongs to the somatotropin/prolactin family.

Its subcellular location is the secreted. Its function is as follows. Plays an important role in growth control. Its major role in stimulating body growth is to stimulate the liver and other tissues to secrete IGF1. It stimulates both the differentiation and proliferation of myoblasts. It also stimulates amino acid uptake and protein synthesis in muscle and other tissues. The protein is Somatotropin (GH1) of Xanthonycticebus pygmaeus (Pygmy slow loris).